Reading from the N-terminus, the 336-residue chain is tRNA N6-adenosine threonylcarbamoyltransferase (336 aa).

Fe cation contacts are provided by His108 and His112. Substrate-binding positions include 129 to 133, Asp161, Glu178, and Ser258; that span reads LISGG. Residue Asp286 coordinates Fe cation.

Belongs to the KAE1 / TsaD family. Fe(2+) serves as cofactor.

Its subcellular location is the cytoplasm. It catalyses the reaction L-threonylcarbamoyladenylate + adenosine(37) in tRNA = N(6)-L-threonylcarbamoyladenosine(37) in tRNA + AMP + H(+). Its function is as follows. Required for the formation of a threonylcarbamoyl group on adenosine at position 37 (t(6)A37) in tRNAs that read codons beginning with adenine. Is probably involved in the transfer of the threonylcarbamoyl moiety of threonylcarbamoyl-AMP (TC-AMP) to the N6 group of A37. The protein is tRNA N6-adenosine threonylcarbamoyltransferase of Pyrobaculum neutrophilum (strain DSM 2338 / JCM 9278 / NBRC 100436 / V24Sta) (Thermoproteus neutrophilus).